A 532-amino-acid polypeptide reads, in one-letter code: Cytochrome P450 monooxygenase criE (532 aa).

Residues V18–L38 traverse the membrane as a helical segment. A heme-binding site is contributed by C441.

The protein belongs to the cytochrome P450 family. It depends on heme as a cofactor.

The protein localises to the membrane. It carries out the reaction preechinulin + reduced [NADPH--hemoprotein reductase] + O2 = neoechinulin A + oxidized [NADPH--hemoprotein reductase] + 2 H2O + H(+). It participates in secondary metabolite biosynthesis. It functions in the pathway alkaloid biosynthesis. Functionally, cytochrome P450 monooxygenase; part of the gene cluster that mediates the biosynthesis of echinulin family alkaloid. The pathway begins with the biosynthesis of the cyclic dipeptide cyclo-L-Trp-L-Ala (cyclo-TA) by the NRPS criC via condensation of L-alanine and L-tryptophan. The prenyltransferase criA then catalyzes the first prenylation step, a reverse prenylation reaction at C2, to yield preechinulin. Preechinulin is the substrate of the cytochrome P450 monooxygenase criE that catalyzes the formation of the double bond between C10 and C11 to produce neoechulin A. The unique prenyltransferase criF functions as a competitive enzyme with criE for preechinulin metabolization and uses preechinulin for effective regiospecific prenylations. Preechinulin is prenylated by criF at C5 or C7. C7-prenylation leads to accumulation of tardioxopiperazine B without further modification by criF. In contrast, the C5-prenylated tardioxopiperazine A can be prenylated again by criF, predominantly at C7 to form echinulin or less frequently at C4 to give variecolorin L. CriF also accepts neoechilunin A to produce varlecolorin G (prenylation at C5) or isoechinulin A (prenylation at C7). CriF further converts isoechinulin A into dehydroechinulin. Moreover, a yet unidentified enzyme can also convert neoechilunin A into neoechilunin B by introducing a double bond between positions C14 and C17 and thus provides a further substrate to criF for C5 and C7 prenylation. In Aspergillus cristatus (Chinese Fuzhuan brick tea-fermentation fungus), this protein is Cytochrome P450 monooxygenase criE.